Consider the following 86-residue polypeptide: Small ribosomal subunit protein bS20 (86 aa).

This sequence belongs to the bacterial ribosomal protein bS20 family.

Functionally, binds directly to 16S ribosomal RNA. The sequence is that of Small ribosomal subunit protein bS20 from Pelagibacter ubique (strain HTCC1062).